The chain runs to 102 residues: Integration host factor subunit beta (102 aa).

The segment at 54–102 (HHRPARMGRNPKTGEPVALPAKYVPHFKPGKELRERVNSSRHQAPLRSQ) is disordered. Positions 82-91 (PGKELRERVN) are enriched in basic and acidic residues. Over residues 93–102 (SRHQAPLRSQ) the composition is skewed to polar residues.

It belongs to the bacterial histone-like protein family. Heterodimer of an alpha and a beta chain.

In terms of biological role, this protein is one of the two subunits of integration host factor, a specific DNA-binding protein that functions in genetic recombination as well as in transcriptional and translational control. This is Integration host factor subunit beta from Halorhodospira halophila (strain DSM 244 / SL1) (Ectothiorhodospira halophila (strain DSM 244 / SL1)).